The primary structure comprises 492 residues: Ketol-acid reductoisomerase (NADP(+)) (492 aa).

The region spanning 17 to 208 (LGQCRLMKKN…GSNKAGVLES (192 aa)) is the KARI N-terminal Rossmann domain. Residues 45-48 (CGSQ), Arg68, Ser76, and Ser78 each bind NADP(+). His132 is a catalytic residue. NADP(+) is bound at residue Gly158. KARI C-terminal knotted domains follow at residues 209–344 (SFVA…KAPV) and 345–487 (YCET…MKDM). Residues Asp217, Glu221, Glu389, and Glu393 each contribute to the Mg(2+) site. Ser414 is a substrate binding site.

The protein belongs to the ketol-acid reductoisomerase family. It depends on Mg(2+) as a cofactor.

The enzyme catalyses (2R)-2,3-dihydroxy-3-methylbutanoate + NADP(+) = (2S)-2-acetolactate + NADPH + H(+). It carries out the reaction (2R,3R)-2,3-dihydroxy-3-methylpentanoate + NADP(+) = (S)-2-ethyl-2-hydroxy-3-oxobutanoate + NADPH + H(+). It participates in amino-acid biosynthesis; L-isoleucine biosynthesis; L-isoleucine from 2-oxobutanoate: step 2/4. Its pathway is amino-acid biosynthesis; L-valine biosynthesis; L-valine from pyruvate: step 2/4. Functionally, involved in the biosynthesis of branched-chain amino acids (BCAA). Catalyzes an alkyl-migration followed by a ketol-acid reduction of (S)-2-acetolactate (S2AL) to yield (R)-2,3-dihydroxy-isovalerate. In the isomerase reaction, S2AL is rearranged via a Mg-dependent methyl migration to produce 3-hydroxy-3-methyl-2-ketobutyrate (HMKB). In the reductase reaction, this 2-ketoacid undergoes a metal-dependent reduction by NADPH to yield (R)-2,3-dihydroxy-isovalerate. The chain is Ketol-acid reductoisomerase (NADP(+)) from Blochmanniella floridana.